The sequence spans 545 residues: ATP synthase subunit alpha (545 aa).

172–179 (GDRKTGKT) contributes to the ATP binding site. Residues 511–545 (FQTTDGTPVINEPEARPLGDDEVTKSQITVSRKTQ) are disordered. The span at 523-534 (PEARPLGDDEVT) shows a compositional bias: basic and acidic residues. Over residues 535–545 (KSQITVSRKTQ) the composition is skewed to polar residues.

Belongs to the ATPase alpha/beta chains family. F-type ATPases have 2 components, CF(1) - the catalytic core - and CF(0) - the membrane proton channel. CF(1) has five subunits: alpha(3), beta(3), gamma(1), delta(1), epsilon(1). CF(0) has three main subunits: a(1), b(2) and c(9-12). The alpha and beta chains form an alternating ring which encloses part of the gamma chain. CF(1) is attached to CF(0) by a central stalk formed by the gamma and epsilon chains, while a peripheral stalk is formed by the delta and b chains.

Its subcellular location is the cell membrane. The enzyme catalyses ATP + H2O + 4 H(+)(in) = ADP + phosphate + 5 H(+)(out). Functionally, produces ATP from ADP in the presence of a proton gradient across the membrane. The alpha chain is a regulatory subunit. This Corynebacterium jeikeium (strain K411) protein is ATP synthase subunit alpha.